Reading from the N-terminus, the 305-residue chain is Porphobilinogen deaminase (305 aa).

S-(dipyrrolylmethanemethyl)cysteine is present on Cys240.

It belongs to the HMBS family. In terms of assembly, monomer. Dipyrromethane serves as cofactor.

It catalyses the reaction 4 porphobilinogen + H2O = hydroxymethylbilane + 4 NH4(+). The protein operates within porphyrin-containing compound metabolism; protoporphyrin-IX biosynthesis; coproporphyrinogen-III from 5-aminolevulinate: step 2/4. Its function is as follows. Tetrapolymerization of the monopyrrole PBG into the hydroxymethylbilane pre-uroporphyrinogen in several discrete steps. The polypeptide is Porphobilinogen deaminase (hemC) (Xylella fastidiosa (strain 9a5c)).